The chain runs to 158 residues: Cyclic pyranopterin monophosphate synthase (158 aa).

Residues 75–77 (LCH) and 113–114 (ME) each bind substrate. Asp-128 is an active-site residue.

This sequence belongs to the MoaC family. As to quaternary structure, homohexamer; trimer of dimers.

The enzyme catalyses (8S)-3',8-cyclo-7,8-dihydroguanosine 5'-triphosphate = cyclic pyranopterin phosphate + diphosphate. Its pathway is cofactor biosynthesis; molybdopterin biosynthesis. Functionally, catalyzes the conversion of (8S)-3',8-cyclo-7,8-dihydroguanosine 5'-triphosphate to cyclic pyranopterin monophosphate (cPMP). In Ralstonia nicotianae (strain ATCC BAA-1114 / GMI1000) (Ralstonia solanacearum), this protein is Cyclic pyranopterin monophosphate synthase.